The following is a 548-amino-acid chain: Chaperonin GroEL (548 aa).

Residues 30–33 (TLGP), K51, 87–91 (DGTTT), G415, 479–481 (NAA), and D495 each bind ATP.

It belongs to the chaperonin (HSP60) family. As to quaternary structure, forms a cylinder of 14 subunits composed of two heptameric rings stacked back-to-back. Interacts with the co-chaperonin GroES.

Its subcellular location is the cytoplasm. The catalysed reaction is ATP + H2O + a folded polypeptide = ADP + phosphate + an unfolded polypeptide.. Functionally, together with its co-chaperonin GroES, plays an essential role in assisting protein folding. The GroEL-GroES system forms a nano-cage that allows encapsulation of the non-native substrate proteins and provides a physical environment optimized to promote and accelerate protein folding. In Oleidesulfovibrio alaskensis (strain ATCC BAA-1058 / DSM 17464 / G20) (Desulfovibrio alaskensis), this protein is Chaperonin GroEL.